Reading from the N-terminus, the 258-residue chain is MATSRLEINFVRLLSRCESLASEKRAETEWRLEKYVGALEEMFVALKKSPSKPTPETLTDYNRKVDFLKGLLEAEKLPSPAEKSLANQFLAPGRTPTISSERTPASKTVHIQSKARCAGEMRKELMSSGVSNSALLENDLRHRKSLPVDERQSAAELDQILQHHHNLQEKLADDMLNLARNLKNNTLAAQNIIKQDNQTLTQSMRQADVNFEKLKTESERLEQHAKKSVNWFLWLMLIVVSFTFISMILFIRLFPRLR.

Residues 1–230 (MATSRLEINF…LEQHAKKSVN (230 aa)) lie on the Cytoplasmic side of the membrane. Residues 151-230 (RQSAAELDQI…LEQHAKKSVN (80 aa)) adopt a coiled-coil conformation. The chain crosses the membrane as a helical; Anchor for type IV membrane protein span at residues 231–251 (WFLWLMLIVVSFTFISMILFI). Over 252 to 258 (RLFPRLR) the chain is Extracellular.

This sequence belongs to the USE1 family.

Its subcellular location is the endoplasmic reticulum membrane. In terms of biological role, SNARE that may be involved in targeting and fusion of Golgi-derived retrograde transport vesicles with the ER. The chain is Vesicle transport protein USE1 (use1) from Danio rerio (Zebrafish).